Reading from the N-terminus, the 469-residue chain is Glutamate--tRNA ligase (469 aa).

Residues 11 to 21 carry the 'HIGH' region motif; that stretch reads PSPTGFIHLGN. Positions 121–131 are enriched in basic and acidic residues; the sequence is PRYDGTWRPEP. A disordered region spans residues 121–141; the sequence is PRYDGTWRPEPGKVLPEPPPG. The short motif at 243 to 247 is the 'KMSKS' region element; that stretch reads KMSKR. Position 246 (Lys-246) interacts with ATP.

This sequence belongs to the class-I aminoacyl-tRNA synthetase family. Glutamate--tRNA ligase type 1 subfamily. As to quaternary structure, monomer.

Its subcellular location is the cytoplasm. The enzyme catalyses tRNA(Glu) + L-glutamate + ATP = L-glutamyl-tRNA(Glu) + AMP + diphosphate. Functionally, catalyzes the attachment of glutamate to tRNA(Glu) in a two-step reaction: glutamate is first activated by ATP to form Glu-AMP and then transferred to the acceptor end of tRNA(Glu). The protein is Glutamate--tRNA ligase of Burkholderia multivorans (strain ATCC 17616 / 249).